An 83-amino-acid polypeptide reads, in one-letter code: Salivary thrombin inhibitor anophelin (83 aa).

The signal sequence occupies residues 1–22 (MANKLVLISLLCVVLVAKITQA). Residues 25 to 51 (QYAPGDEPSYDEDTDDSDKLVENDTSI) are disordered. Asparagine 47 is a glycosylation site (N-linked (GlcNAc...) asparagine). The segment at 54–83 (EDYAAIEASLSETFNTAADPGRRLGEGSKP) is sufficient for host thrombin inhibition. Positions 56–62 (YAAIEAS) are blocks exosite I of host thrombin. The disordered stretch occupies residues 64 to 83 (SETFNTAADPGRRLGEGSKP). The blocks active site cleft of host thrombin in a reverse direction compared to substrates stretch occupies residues 72–75 (DPGR). Over residues 73–83 (PGRRLGEGSKP) the composition is skewed to basic and acidic residues.

This sequence belongs to the anophelin family. In terms of assembly, interacts with human F2 (thrombin); the interaction results in thrombin inhibition. In terms of tissue distribution, salivary gland (at protein level).

It is found in the secreted. Its activity is regulated as follows. Increasing concentration of NaCl decreases affinity for thrombin. In terms of biological role, salivary protein with anticoagulant activity that inhibits host thrombin (F2); binds to the proteinase in a reverse orientation (opposite to substrates). Inhibits thrombin-induced platelet aggregation. This chain is Salivary thrombin inhibitor anophelin, found in Anopheles albimanus (New world malaria mosquito).